A 418-amino-acid polypeptide reads, in one-letter code: Tyrosine--tRNA ligase (418 aa).

Y34 provides a ligand contact to L-tyrosine. The 'HIGH' region signature appears at 39–48 (PTADSLHLGH). Positions 169 and 173 each coordinate L-tyrosine. Positions 229–233 (KFGKS) match the 'KMSKS' region motif. K232 provides a ligand contact to ATP. The region spanning 352 to 418 (LNLVDMLVTA…GKKKYAVLTY (67 aa)) is the S4 RNA-binding domain.

Belongs to the class-I aminoacyl-tRNA synthetase family. TyrS type 1 subfamily. As to quaternary structure, homodimer.

It is found in the cytoplasm. The catalysed reaction is tRNA(Tyr) + L-tyrosine + ATP = L-tyrosyl-tRNA(Tyr) + AMP + diphosphate + H(+). Catalyzes the attachment of tyrosine to tRNA(Tyr) in a two-step reaction: tyrosine is first activated by ATP to form Tyr-AMP and then transferred to the acceptor end of tRNA(Tyr). The chain is Tyrosine--tRNA ligase from Streptococcus pyogenes serotype M12 (strain MGAS2096).